The sequence spans 444 residues: Phosphoglucosamine mutase (444 aa).

The Phosphoserine intermediate role is filled by serine 100. Residues serine 100, aspartate 234, aspartate 236, and aspartate 238 each contribute to the Mg(2+) site. Serine 100 carries the phosphoserine modification.

This sequence belongs to the phosphohexose mutase family. It depends on Mg(2+) as a cofactor. Post-translationally, activated by phosphorylation.

The enzyme catalyses alpha-D-glucosamine 1-phosphate = D-glucosamine 6-phosphate. In terms of biological role, catalyzes the conversion of glucosamine-6-phosphate to glucosamine-1-phosphate. The protein is Phosphoglucosamine mutase of Rubrobacter xylanophilus (strain DSM 9941 / JCM 11954 / NBRC 16129 / PRD-1).